The sequence spans 310 residues: p-hydroxybenzoic acid efflux pump subunit AaeA (310 aa).

A helical membrane pass occupies residues A12 to Y32.

Belongs to the membrane fusion protein (MFP) (TC 8.A.1) family.

The protein resides in the cell inner membrane. Functionally, forms an efflux pump with AaeB. This is p-hydroxybenzoic acid efflux pump subunit AaeA from Citrobacter koseri (strain ATCC BAA-895 / CDC 4225-83 / SGSC4696).